Reading from the N-terminus, the 154-residue chain is Prefoldin subunit alpha (154 aa).

It belongs to the prefoldin alpha subunit family. As to quaternary structure, heterohexamer of two alpha and four beta subunits.

The protein resides in the cytoplasm. Its function is as follows. Molecular chaperone capable of stabilizing a range of proteins. Seems to fulfill an ATP-independent, HSP70-like function in archaeal de novo protein folding. The protein is Prefoldin subunit alpha of Hyperthermus butylicus (strain DSM 5456 / JCM 9403 / PLM1-5).